A 467-amino-acid polypeptide reads, in one-letter code: Putative ankyrin repeat protein R911 (467 aa).

ANK repeat units lie at residues 38-70 (IKTDIIEYVMENDLIDILKYLSLLKKLGHPIIV), 79-108 (TLNKYLIKNCGENQLEIVKFLVSLGADIRA), 109-138 (GNDYAVGLSSQNGHLEVVKYLVNQGSDIRA), 140-168 (NDYAVRWASGNGHLEVVKYLVSQGANIRA), 170-198 (NDHAIGLASYYGYLEVVKYLVSQGADIRS), 199-228 (DNDYAVRMASRNGHIEVVEYLVSQGANIRS), 229-258 (DNDYAVRLASQNGHLEVVKYLVSQGADIKS), 260-288 (NDYAVRLASQNGHLEVVEYLVTQGTNIRV), 289-318 (NNNYAVEWASKNGNLEVVKYLISQGADIIA), 320-348 (NNFAVRWASRNGHLEVVKYLVSLGADIKS), 350-378 (NDYAVRWASGNGHLEVVKYLVSQGSDIRV), 379-408 (ENDYAVRWASRNGHFDVIKYLVSQGADIRS), 410-438 (NDYAVKWASENGHLEVVKFLVSLGADIKA), and 440-467 (DDYAVRWASEKGHLEVVEYLVSQGAVLS).

The protein is Putative ankyrin repeat protein R911 of Acanthamoeba polyphaga mimivirus (APMV).